A 217-amino-acid polypeptide reads, in one-letter code: MOB kinase activator-like 2 (217 aa).

The segment at 15–38 (GKESIRGNYKPKKHPRGSSRHTMR) is disordered. Over residues 23 to 38 (YKPKKHPRGSSRHTMR) the composition is skewed to basic residues. Residues C89, C94, H167, and H172 each coordinate Zn(2+).

It belongs to the MOB1/phocein family.

The polypeptide is MOB kinase activator-like 2 (mob2) (Dictyostelium discoideum (Social amoeba)).